The primary structure comprises 164 residues: 6,7-dimethyl-8-ribityllumazine synthase 1 (164 aa).

Residues F27, 58 to 60 (SLE), and 87 to 89 (TII) contribute to the 5-amino-6-(D-ribitylamino)uracil site. 92-93 (DT) is a binding site for (2S)-2-hydroxy-3-oxobutyl phosphate. The active-site Proton donor is H95. N120 serves as a coordination point for 5-amino-6-(D-ribitylamino)uracil. R134 contacts (2S)-2-hydroxy-3-oxobutyl phosphate.

Belongs to the DMRL synthase family. Homopentamer.

The catalysed reaction is (2S)-2-hydroxy-3-oxobutyl phosphate + 5-amino-6-(D-ribitylamino)uracil = 6,7-dimethyl-8-(1-D-ribityl)lumazine + phosphate + 2 H2O + H(+). It participates in cofactor biosynthesis; riboflavin biosynthesis; riboflavin from 2-hydroxy-3-oxobutyl phosphate and 5-amino-6-(D-ribitylamino)uracil: step 1/2. Catalyzes the formation of 6,7-dimethyl-8-ribityllumazine by condensation of 5-amino-6-(D-ribitylamino)uracil with 3,4-dihydroxy-2-butanone 4-phosphate. This is the penultimate step in the biosynthesis of riboflavin. This Mesorhizobium japonicum (strain LMG 29417 / CECT 9101 / MAFF 303099) (Mesorhizobium loti (strain MAFF 303099)) protein is 6,7-dimethyl-8-ribityllumazine synthase 1 (ribH1).